A 355-amino-acid polypeptide reads, in one-letter code: Zinc transporter ZIP13 homolog (355 aa).

A glycan (N-linked (GlcNAc...) asparagine) is linked at Asn-4. Transmembrane regions (helical) follow at residues 37-57 (VFSL…LIII), 79-99 (VLLS…LLPE), and 118-138 (LWVL…SGYA). N-linked (GlcNAc...) asparagine glycosylation occurs at Asn-218. Transmembrane regions (helical) follow at residues 273 to 293 (LLTA…SGVT) and 301 to 321 (SWIM…TVLP).

The protein belongs to the ZIP transporter (TC 2.A.5) family. KE4/Catsup subfamily.

Its subcellular location is the basolateral cell membrane. The protein resides in the golgi apparatus membrane. Involved in zinc transport and homeostasis. The chain is Zinc transporter ZIP13 homolog (Zip99C) from Drosophila melanogaster (Fruit fly).